The primary structure comprises 131 residues: Small ribosomal subunit protein uS8 (131 aa).

It belongs to the universal ribosomal protein uS8 family. Part of the 30S ribosomal subunit. Contacts proteins S5 and S12.

One of the primary rRNA binding proteins, it binds directly to 16S rRNA central domain where it helps coordinate assembly of the platform of the 30S subunit. The chain is Small ribosomal subunit protein uS8 from Campylobacter hominis (strain ATCC BAA-381 / DSM 21671 / CCUG 45161 / LMG 19568 / NCTC 13146 / CH001A).